The chain runs to 290 residues: GTPase Era (290 aa).

Residues 2-169 form the Era-type G domain; sequence KSGFVSIIGR…KDKIYENLQE (168 aa). A G1 region spans residues 10 to 17; sequence GRPSTGKS. 10 to 17 contacts GTP; the sequence is GRPSTGKS. A G2 region spans residues 36-40; sequence QTTRN. Residues 57 to 60 are G3; that stretch reads DTPG. GTP contacts are provided by residues 57-61 and 119-122; these read DTPGF and NKID. Positions 119 to 122 are G4; it reads NKID. Residues 148 to 150 are G5; that stretch reads ISA. Positions 200 to 276 constitute a KH type-2 domain; sequence LKEELPYSLY…DLFLQVKLRK (77 aa).

The protein belongs to the TRAFAC class TrmE-Era-EngA-EngB-Septin-like GTPase superfamily. Era GTPase family. In terms of assembly, monomer.

The protein localises to the cytoplasm. Its subcellular location is the cell inner membrane. In terms of biological role, an essential GTPase that binds both GDP and GTP, with rapid nucleotide exchange. Plays a role in 16S rRNA processing and 30S ribosomal subunit biogenesis and possibly also in cell cycle regulation and energy metabolism. The chain is GTPase Era from Borrelia turicatae (strain 91E135).